A 156-amino-acid chain; its full sequence is Small ribosomal subunit protein uS7c (156 aa).

Belongs to the universal ribosomal protein uS7 family. Part of the 30S ribosomal subunit.

The protein resides in the plastid. The protein localises to the chloroplast. Functionally, one of the primary rRNA binding proteins, it binds directly to 16S rRNA where it nucleates assembly of the head domain of the 30S subunit. This chain is Small ribosomal subunit protein uS7c (rps7), found in Stangeria eriopus (Natal grass cycad).